The sequence spans 418 residues: Imidazolonepropionase (418 aa).

Positions 80 and 82 each coordinate Fe(3+). Residues His-80 and His-82 each coordinate Zn(2+). Residues Arg-89, Tyr-152, and His-185 each coordinate 4-imidazolone-5-propanoate. Tyr-152 contacts N-formimidoyl-L-glutamate. His-250 lines the Fe(3+) pocket. His-250 lines the Zn(2+) pocket. Gln-253 is a binding site for 4-imidazolone-5-propanoate. Asp-325 lines the Fe(3+) pocket. Zn(2+) is bound at residue Asp-325. N-formimidoyl-L-glutamate-binding residues include Asn-327 and Gly-329. Ser-330 is a binding site for 4-imidazolone-5-propanoate.

Belongs to the metallo-dependent hydrolases superfamily. HutI family. Zn(2+) is required as a cofactor. It depends on Fe(3+) as a cofactor.

The protein resides in the cytoplasm. It catalyses the reaction 4-imidazolone-5-propanoate + H2O = N-formimidoyl-L-glutamate. The protein operates within amino-acid degradation; L-histidine degradation into L-glutamate; N-formimidoyl-L-glutamate from L-histidine: step 3/3. Its function is as follows. Catalyzes the hydrolytic cleavage of the carbon-nitrogen bond in imidazolone-5-propanoate to yield N-formimidoyl-L-glutamate. It is the third step in the universal histidine degradation pathway. This is Imidazolonepropionase from Solibacter usitatus (strain Ellin6076).